The primary structure comprises 842 residues: Protein translocase subunit SecA (842 aa).

ATP is bound by residues Q85, 103-107 (GEGKT), and D493. Zn(2+) is bound by residues C825, C827, C836, and H837.

This sequence belongs to the SecA family. In terms of assembly, monomer and homodimer. Part of the essential Sec protein translocation apparatus which comprises SecA, SecYEG and auxiliary proteins SecDF. Other proteins may also be involved. It depends on Zn(2+) as a cofactor.

The protein resides in the cell membrane. Its subcellular location is the cytoplasm. It carries out the reaction ATP + H2O + cellular proteinSide 1 = ADP + phosphate + cellular proteinSide 2.. In terms of biological role, part of the Sec protein translocase complex. Interacts with the SecYEG preprotein conducting channel. Has a central role in coupling the hydrolysis of ATP to the transfer of proteins into and across the cell membrane, serving as an ATP-driven molecular motor driving the stepwise translocation of polypeptide chains across the membrane. In Streptococcus uberis (strain ATCC BAA-854 / 0140J), this protein is Protein translocase subunit SecA.